The primary structure comprises 291 residues: Probable plasmid-partitioning protein ParB (291 aa).

The protein belongs to the ParB family.

This chain is Probable plasmid-partitioning protein ParB, found in Deinococcus radiodurans (strain ATCC 13939 / DSM 20539 / JCM 16871 / CCUG 27074 / LMG 4051 / NBRC 15346 / NCIMB 9279 / VKM B-1422 / R1).